Reading from the N-terminus, the 174-residue chain is MIDGDGYRPNVGIVICNSHGQVFWARRYGQHSWQFPQGGIDEGETPEQAMYRELYEEVGLTKKDVRILASSRHWLRYKLPKRLVRWDSKPVCIGQKQKWFLLSLECDESRVNMQRGSTPEFDGWRWVSYWYPVRQVVSFKRDVYRRALKEFAAIAMPFKERKERKLKRYKSKRG.

The Nudix hydrolase domain occupies 6–149; that stretch reads GYRPNVGIVI…KRDVYRRALK (144 aa). The Nudix box motif lies at 38–59; that stretch reads GGIDEGETPEQAMYRELYEEVG.

The protein belongs to the Nudix hydrolase family. RppH subfamily. A divalent metal cation serves as cofactor.

Its function is as follows. Accelerates the degradation of transcripts by removing pyrophosphate from the 5'-end of triphosphorylated RNA, leading to a more labile monophosphorylated state that can stimulate subsequent ribonuclease cleavage. This Photobacterium profundum (strain SS9) protein is RNA pyrophosphohydrolase.